A 261-amino-acid polypeptide reads, in one-letter code: Shikimate dehydrogenase (NADP(+)) (261 aa).

Shikimate contacts are provided by residues 13–15 (SLS) and threonine 60. Residue lysine 64 is the Proton acceptor of the active site. Shikimate-binding residues include asparagine 85 and aspartate 100. NADP(+) contacts are provided by residues 121-125 (GAGGA) and isoleucine 202. Tyrosine 204 contributes to the shikimate binding site. Position 225 (glycine 225) interacts with NADP(+).

The protein belongs to the shikimate dehydrogenase family. Homodimer.

The enzyme catalyses shikimate + NADP(+) = 3-dehydroshikimate + NADPH + H(+). Its pathway is metabolic intermediate biosynthesis; chorismate biosynthesis; chorismate from D-erythrose 4-phosphate and phosphoenolpyruvate: step 4/7. Functionally, involved in the biosynthesis of the chorismate, which leads to the biosynthesis of aromatic amino acids. Catalyzes the reversible NADPH linked reduction of 3-dehydroshikimate (DHSA) to yield shikimate (SA). The chain is Shikimate dehydrogenase (NADP(+)) from Exiguobacterium sibiricum (strain DSM 17290 / CCUG 55495 / CIP 109462 / JCM 13490 / 255-15).